The sequence spans 715 residues: Staphylocoagulase (715 aa).

The N-terminal stretch at 1–26 (MKKQIISLGALAVASSLFTWDNKADA) is a signal peptide. Positions 306–327 (KYGESETKSPVVKEENKVEDPQ) are enriched in basic and acidic residues. 2 disordered regions span residues 306–348 (KYGE…EETT) and 430–470 (QGTE…FNKT). The segment covering 431-443 (GTESTLKGIQGES) has biased composition (polar residues). 8 repeat units span residues 495–521 (ARPRFNKPSETNAYNVTTNQDGTVSYG), 522–548 (ARPTQNKASETNAYNVTTHANGQVSYG), 549–575 (ARPTQKKPSETNAYNVTTHANGQVSYG), 576–602 (ARPTYNKPSETNAYNVTTHGNGQVSYG), 603–629 (ARPTYKKPSKTNAYNVTTHANGQVSYG), 630–656 (ARPTQNKPSETNAYNVTTHANGQVSYG), 657–683 (ARPTQNKPSETNAYNVTTHGNGQVSYG), and 684–710 (ARPTYNKPSKTNAYNVTTHADGTATYG). The segment at 495 to 710 (ARPRFNKPSE…THADGTATYG (216 aa)) is 8 X 27 AA tandem repeats of A-R-P-[RT]-[FQY]-[NK]-K-[PA]-S-[EK]-T-N-A-Y-N-V-T-T-[NH]-[QAG]-[DN]-G-[TQ]-[VA]-[ST]-Y-G. The segment at 674-697 (THGNGQVSYGARPTYNKPSKTNAY) is disordered.

Belongs to the staphylocoagulase family.

Functionally, staphylocoagulase is an extracellular protein which specifically forms a complex with human prothrombin. This complex named staphylothrombin can clot fibrinogen without any proteolytic cleavage of prothrombin. The chain is Staphylocoagulase from Staphylococcus aureus.